The chain runs to 454 residues: Metalloprotease MTH_856 (454 aa).

The tract at residues 92–115 (QVGSGAPSVDKTMVRSSRPPSDVP) is disordered.

It belongs to the peptidase U62 family.

Its function is as follows. Probable metalloprotease. This Methanothermobacter thermautotrophicus (strain ATCC 29096 / DSM 1053 / JCM 10044 / NBRC 100330 / Delta H) (Methanobacterium thermoautotrophicum) protein is Metalloprotease MTH_856.